The primary structure comprises 177 residues: UPF0251 protein Cag_0886 (177 aa).

Positions 147-177 are disordered; sequence GGCLSDEESDEQENEQRTVGYPESEEELEIE.

This sequence belongs to the UPF0251 family.

This chain is UPF0251 protein Cag_0886, found in Chlorobium chlorochromatii (strain CaD3).